We begin with the raw amino-acid sequence, 533 residues long: MTPRIESEESAPLVNKNNNNNNDNNNNNNVDEENPLIIESGIPIEDLEQKNKPYLIKVPNIDKPDSKWINFKTLWAFTGPGFLMSIAYLDPGNLESDIQAGAMAGYQLLWVLFWSTVIGFWLQMLASRLGVVTGKHLAEHCREQYPKTPRLLLWLMTELAIIGSDIQEVIGTAIALQILSNGHIPLWAGVLFTAADTFTFLFLEKYGIRKLEAFFCSLIAIMAISFGVEYIISKPDQIEVVKGVFIPLCSQNNISQAVGILGAVVMPHNIYLHSALVQSREIDRKSETQVKIANKYNRLESAFALIISFIINLLLVSVFAKGFYGETTEIGLSSAADFLMDKYGKVAKYIWAIGLFSAGQCSTMTGTYSGQFVMEGFLKLKIAPWKRLLITRCTAIVPAMVVAILSTSHLDSLDQWLNILQSIQLPFAVVPVLLFTSSEKIMGSKFKNHWLNNQFVRFLSLLIIAINIYLIITFSMQISESAWMISIVSISFFFYFIFIVYLSMGQENFNSMTKKIKNLFNNNSNQTYNNINY.

The segment at 1 to 33 (MTPRIESEESAPLVNKNNNNNNDNNNNNNVDEE) is disordered. Topologically, residues 1-68 (MTPRIESEES…PNIDKPDSKW (68 aa)) are cytoplasmic. The segment covering 14–29 (VNKNNNNNNDNNNNNN) has biased composition (low complexity). A helical membrane pass occupies residues 69–89 (INFKTLWAFTGPGFLMSIAYL). The Extracellular portion of the chain corresponds to 90–101 (DPGNLESDIQAG). A helical transmembrane segment spans residues 102-122 (AMAGYQLLWVLFWSTVIGFWL). The Cytoplasmic segment spans residues 123-158 (QMLASRLGVVTGKHLAEHCREQYPKTPRLLLWLMTE). Residues 159 to 179 (LAIIGSDIQEVIGTAIALQIL) form a helical membrane-spanning segment. Residues 180 to 182 (SNG) are Extracellular-facing. Residues 183–203 (HIPLWAGVLFTAADTFTFLFL) form a helical membrane-spanning segment. At 204–212 (EKYGIRKLE) the chain is on the cytoplasmic side. Residues 213-233 (AFFCSLIAIMAISFGVEYIIS) traverse the membrane as a helical segment. The Extracellular segment spans residues 234–256 (KPDQIEVVKGVFIPLCSQNNISQ). Asparagine 253 carries an N-linked (GlcNAc...) asparagine glycan. The chain crosses the membrane as a helical span at residues 257 to 277 (AVGILGAVVMPHNIYLHSALV). Over 278-302 (QSREIDRKSETQVKIANKYNRLESA) the chain is Cytoplasmic. Residues 303-323 (FALIISFIINLLLVSVFAKGF) traverse the membrane as a helical segment. Topologically, residues 324-348 (YGETTEIGLSSAADFLMDKYGKVAK) are extracellular. Residues 349–368 (YIWAIGLFSAGQCSTMTGTY) traverse the membrane as a helical segment. Over 369–387 (SGQFVMEGFLKLKIAPWKR) the chain is Cytoplasmic. Residues 388 to 408 (LLITRCTAIVPAMVVAILSTS) form a helical membrane-spanning segment. At 409 to 415 (HLDSLDQ) the chain is on the extracellular side. Residues 416–436 (WLNILQSIQLPFAVVPVLLFT) traverse the membrane as a helical segment. Topologically, residues 437 to 457 (SSEKIMGSKFKNHWLNNQFVR) are cytoplasmic. A helical transmembrane segment spans residues 458–478 (FLSLLIIAINIYLIITFSMQI). Residues 479-481 (SES) are Extracellular-facing. Residues 482–502 (AWMISIVSISFFFYFIFIVYL) traverse the membrane as a helical segment. At 503–533 (SMGQENFNSMTKKIKNLFNNNSNQTYNNINY) the chain is on the cytoplasmic side.

It belongs to the NRAMP family.

It is found in the membrane. Functionally, depletes iron from the phagolysosome in an ATP-dependent process. May rather act as a symporter of protons and metal cations in an ATP-dependent process. Nramp1 overexpression protected cells from L.pneumophila infection. This Dictyostelium discoideum (Social amoeba) protein is Metal transporter nramp1 homolog (nramp1).